The primary structure comprises 396 residues: Phosphoglycerate kinase (396 aa).

Substrate is bound by residues 21-23 (DLN), Arg-36, 59-62 (HFDR), Arg-118, and Arg-151. ATP is bound by residues Lys-201, Glu-323, and 353–356 (GGDT).

Belongs to the phosphoglycerate kinase family. Monomer.

The protein resides in the cytoplasm. The catalysed reaction is (2R)-3-phosphoglycerate + ATP = (2R)-3-phospho-glyceroyl phosphate + ADP. Its pathway is carbohydrate degradation; glycolysis; pyruvate from D-glyceraldehyde 3-phosphate: step 2/5. The protein is Phosphoglycerate kinase of Granulibacter bethesdensis (strain ATCC BAA-1260 / CGDNIH1).